Reading from the N-terminus, the 334-residue chain is Glycerol-1-phosphate dehydrogenase [NAD(P)+] (334 aa).

Residues G77 to D81 and T99 to S102 contribute to the NAD(+) site. A substrate-binding site is contributed by D104. S108 is an NAD(+) binding site. Residue D147 participates in substrate binding. Zn(2+) is bound by residues D147 and H225. H229 lines the substrate pocket. Position 246 (H246) interacts with Zn(2+).

Belongs to the glycerol-1-phosphate dehydrogenase family. Zn(2+) serves as cofactor.

It localises to the cytoplasm. It carries out the reaction sn-glycerol 1-phosphate + NAD(+) = dihydroxyacetone phosphate + NADH + H(+). The enzyme catalyses sn-glycerol 1-phosphate + NADP(+) = dihydroxyacetone phosphate + NADPH + H(+). The protein operates within membrane lipid metabolism; glycerophospholipid metabolism. In terms of biological role, catalyzes the NAD(P)H-dependent reduction of dihydroxyacetonephosphate (DHAP or glycerone phosphate) to glycerol 1-phosphate (G1P). The G1P thus generated is used as the glycerophosphate backbone of phospholipids in the cellular membranes of Archaea. The polypeptide is Glycerol-1-phosphate dehydrogenase [NAD(P)+] (Methanococcus maripaludis (strain C7 / ATCC BAA-1331)).